A 427-amino-acid polypeptide reads, in one-letter code: Mitochondrial distribution and morphology protein 10 (427 aa).

Residues Ser-393–Ser-414 show a composition bias toward low complexity. Positions Ser-393–Ser-427 are disordered.

It belongs to the MDM10 family. Component of the ER-mitochondria encounter structure (ERMES) or MDM complex, composed of mmm1, mdm10, mdm12 and mdm34. Associates with the mitochondrial outer membrane sorting assembly machinery SAM(core) complex.

It localises to the mitochondrion outer membrane. Functionally, component of the ERMES/MDM complex, which serves as a molecular tether to connect the endoplasmic reticulum and mitochondria. Components of this complex are involved in the control of mitochondrial shape and protein biogenesis and may function in phospholipid exchange. mdm10 is involved in the late assembly steps of the general translocase of the mitochondrial outer membrane (TOM complex). Functions in the tom40-specific route of the assembly of outer membrane beta-barrel proteins, including the association of tom40 with the receptor tom22 and small TOM proteins. Can associate with the SAM(core) complex as well as the mdm12-mmm1 complex, both involved in late steps of the major beta-barrel assembly pathway, that is responsible for biogenesis of all outer membrane beta-barrel proteins. May act as a switch that shuttles between both complexes and channels precursor proteins into the tom40-specific pathway. Plays a role in mitochondrial morphology and in the inheritance of mitochondria. This Emericella nidulans (strain FGSC A4 / ATCC 38163 / CBS 112.46 / NRRL 194 / M139) (Aspergillus nidulans) protein is Mitochondrial distribution and morphology protein 10 (mdmB).